A 668-amino-acid polypeptide reads, in one-letter code: UvrABC system protein B (668 aa).

Residues 31-416 (QGITDGVPAQ…RGHIIEQIIR (386 aa)) enclose the Helicase ATP-binding domain. 44 to 51 (GTTGSGKT) is a binding site for ATP. Residues 97–120 (YYDYYQPEAYIARSDTYIEKSLLI) carry the Beta-hairpin motif. A Helicase C-terminal domain is found at 433–596 (QIDDLLEEIR…ITPQPIIKPI (164 aa)). The UVR domain occupies 621 to 656 (EASIKTYEEAMYQAAQEFQFDEAAKYRDLMNAAKKQ).

It belongs to the UvrB family. Forms a heterotetramer with UvrA during the search for lesions. Interacts with UvrC in an incision complex.

It localises to the cytoplasm. In terms of biological role, the UvrABC repair system catalyzes the recognition and processing of DNA lesions. A damage recognition complex composed of 2 UvrA and 2 UvrB subunits scans DNA for abnormalities. Upon binding of the UvrA(2)B(2) complex to a putative damaged site, the DNA wraps around one UvrB monomer. DNA wrap is dependent on ATP binding by UvrB and probably causes local melting of the DNA helix, facilitating insertion of UvrB beta-hairpin between the DNA strands. Then UvrB probes one DNA strand for the presence of a lesion. If a lesion is found the UvrA subunits dissociate and the UvrB-DNA preincision complex is formed. This complex is subsequently bound by UvrC and the second UvrB is released. If no lesion is found, the DNA wraps around the other UvrB subunit that will check the other stand for damage. The protein is UvrABC system protein B of Chlamydia trachomatis serovar D (strain ATCC VR-885 / DSM 19411 / UW-3/Cx).